Here is a 143-residue protein sequence, read N- to C-terminus: Glutamyl-tRNA(Gln) amidotransferase subunit C, chloroplastic/mitochondrial (143 aa).

This sequence belongs to the GatC family. In terms of assembly, subunit of the heterotrimeric GatCAB amidotransferase (AdT) complex, composed of A, B and C subunits.

The protein resides in the mitochondrion. It localises to the plastid. The protein localises to the chloroplast. The catalysed reaction is L-glutamyl-tRNA(Gln) + L-glutamine + ATP + H2O = L-glutaminyl-tRNA(Gln) + L-glutamate + ADP + phosphate + H(+). Allows the formation of correctly charged Gln-tRNA(Gln) through the transamidation of misacylated Glu-tRNA(Gln) in chloroplasts and mitochondria. The reaction takes place in the presence of glutamine and ATP through an activated gamma-phospho-Glu-tRNA(Gln). The polypeptide is Glutamyl-tRNA(Gln) amidotransferase subunit C, chloroplastic/mitochondrial (Ricinus communis (Castor bean)).